The chain runs to 211 residues: ATP-dependent Clp protease proteolytic subunit (211 aa).

Residue Ser-114 is the Nucleophile of the active site. The active site involves His-139.

It belongs to the peptidase S14 family. Fourteen ClpP subunits assemble into 2 heptameric rings which stack back to back to give a disk-like structure with a central cavity, resembling the structure of eukaryotic proteasomes.

Its subcellular location is the cytoplasm. It carries out the reaction Hydrolysis of proteins to small peptides in the presence of ATP and magnesium. alpha-casein is the usual test substrate. In the absence of ATP, only oligopeptides shorter than five residues are hydrolyzed (such as succinyl-Leu-Tyr-|-NHMec, and Leu-Tyr-Leu-|-Tyr-Trp, in which cleavage of the -Tyr-|-Leu- and -Tyr-|-Trp bonds also occurs).. Cleaves peptides in various proteins in a process that requires ATP hydrolysis. Has a chymotrypsin-like activity. Plays a major role in the degradation of misfolded proteins. The sequence is that of ATP-dependent Clp protease proteolytic subunit from Pseudomonas fluorescens (strain ATCC BAA-477 / NRRL B-23932 / Pf-5).